The primary structure comprises 422 residues: Glutamate 2,3-aminomutase (422 aa).

Positions 150 to 371 (RRYPDRLIIN…AIPTYIVNAP (222 aa)) constitute a Radical SAM core domain. [4Fe-4S] cluster is bound by residues C164, C168, and C171. K376 is subject to N6-(pyridoxal phosphate)lysine.

Belongs to the radical SAM superfamily. Pyridoxal 5'-phosphate serves as cofactor. Requires [4Fe-4S] cluster as cofactor.

The enzyme catalyses L-glutamate = 3-aminopentanedioate. Its function is as follows. Catalyzes the interconversion of L-glutamate and L-beta-glutamate. Does not have L-lysine 2,3-aminomutase activity. This Clostridioides difficile (strain 630) (Peptoclostridium difficile) protein is Glutamate 2,3-aminomutase (eam).